The following is a 356-amino-acid chain: Dual-specificity RNA methyltransferase RlmN (356 aa).

Glu89 (proton acceptor) is an active-site residue. Positions 108–341 (SHARYTICVS…CTIRESKGLD (234 aa)) constitute a Radical SAM core domain. Cys115 and Cys346 form a disulfide bridge. [4Fe-4S] cluster is bound by residues Cys122, Cys126, and Cys129. S-adenosyl-L-methionine is bound by residues 172 to 173 (GE), Ser204, 227 to 229 (SLH), and Asn303. Residue Cys346 is the S-methylcysteine intermediate of the active site.

This sequence belongs to the radical SAM superfamily. RlmN family. The cofactor is [4Fe-4S] cluster.

The protein resides in the cytoplasm. It catalyses the reaction adenosine(2503) in 23S rRNA + 2 reduced [2Fe-2S]-[ferredoxin] + 2 S-adenosyl-L-methionine = 2-methyladenosine(2503) in 23S rRNA + 5'-deoxyadenosine + L-methionine + 2 oxidized [2Fe-2S]-[ferredoxin] + S-adenosyl-L-homocysteine. The catalysed reaction is adenosine(37) in tRNA + 2 reduced [2Fe-2S]-[ferredoxin] + 2 S-adenosyl-L-methionine = 2-methyladenosine(37) in tRNA + 5'-deoxyadenosine + L-methionine + 2 oxidized [2Fe-2S]-[ferredoxin] + S-adenosyl-L-homocysteine. Specifically methylates position 2 of adenine 2503 in 23S rRNA and position 2 of adenine 37 in tRNAs. m2A2503 modification seems to play a crucial role in the proofreading step occurring at the peptidyl transferase center and thus would serve to optimize ribosomal fidelity. The protein is Dual-specificity RNA methyltransferase RlmN of Campylobacter jejuni subsp. jejuni serotype O:2 (strain ATCC 700819 / NCTC 11168).